The sequence spans 338 residues: HLA class I histocompatibility antigen, alpha chain G (338 aa).

Residues 1-24 (MVVMAPRTLFLLLSGALTLTETWA) form the signal peptide. Residues 3–11 (VMAPRTLFL) form a VL9 epitope region. The alpha-1 stretch occupies residues 25–114 (GSHSMRYFSA…LRGYYNQSEA (90 aa)). Over 25-308 (GSHSMRYFSA…KQSSLPTIPI (284 aa)) the chain is Extracellular. Residues Tyr-31, His-94, Asn-101, and Tyr-108 each contribute to the a peptide antigen site. Asn-110 is a glycosylation site (N-linked (GlcNAc...) asparagine). An alpha-2 region spans residues 115–206 (SSHTLQWMIG…ENGKEMLQRA (92 aa)). A disulfide bridge links Cys-125 with Cys-188. Residues Ser-167, Lys-170, Gln-179, Arg-180, Tyr-183, and Tyr-195 each coordinate a peptide antigen. Residues 207-298 (DPPKTHVTHH…GLPEPLMLRW (92 aa)) form an alpha-3 region. One can recognise an Ig-like C1-type domain in the interval 209–299 (PKTHVTHHPV…LPEPLMLRWK (91 aa)). Cysteines 227 and 283 form a disulfide. The segment at 299-308 (KQSSLPTIPI) is connecting peptide. The helical transmembrane segment at 309-332 (MGIVAGLVVLAAVVTGAAVAAVLW) threads the bilayer. Over 333-338 (RKKSSD) the chain is Cytoplasmic. The short motif at 334–336 (KKS) is the ER-retrieval signal element.

The protein belongs to the MHC class I family. Forms a heterotrimer with B2M and a self-peptide (peptide-bound HLA-G-B2M). HLA-G-B2M complex interacts with components of the antigen processing machinery TAPBP and TAP1-TAP2 complex; this interaction is required for loading of high affinity peptides and heterotrimer translocation to the cell surface. Interacts with CALCR; this interaction is required for appropriate folding. Interacts with COPB1; this interaction mediates the endoplasmic reticulum (ER) retrieval of HLA-G-B2M complexes that bind low affinity peptides. On the cell surface, peptide-bound HLA-G-B2M molecules (referred to as monomers) can form disulfide-linked homomultimers, homodimers and homotrimers. Interacts with KIR2DL4; this interaction is direct. Interacts with LILRB1 and LILRB2 receptors; this interaction is direct. Interacts with CD160; this interactions is direct. Interacts with CD8A homodimer; this interaction is direct and might down-regulate T cell receptor signaling. Isoform 2: Forms a non-disulfide-linked homodimer and interacts with LILRB2. N-glycosylated. Post-translationally, produced by proteolytic cleavage at the cell surface (shedding) by matrix metalloproteinase MMP2. As to expression, expressed in adult eye. Expressed in immune cell subsets including monocytes, myeloid and plasmacytoid dendritic cells and regulatory T cells (Tr1)(at protein level). Secreted by follicular dendritic cell and follicular helper T cells. In terms of tissue distribution, detected in physiological fluids including amniotic fluid and serum. Expressed in placenta, amniotic membrane, skin, cord blood and peripheral blood mononuclear cells.

It localises to the cell membrane. The protein resides in the endoplasmic reticulum membrane. Its subcellular location is the early endosome membrane. It is found in the secreted. The protein localises to the early endosome. It localises to the cell projection. The protein resides in the filopodium membrane. Non-classical major histocompatibility class Ib molecule involved in immune regulatory processes at the maternal-fetal interface. In complex with B2M/beta-2 microglobulin binds a limited repertoire of nonamer self-peptides derived from intracellular proteins including histones and ribosomal proteins. Peptide-bound HLA-G-B2M complex acts as a ligand for inhibitory/activating KIR2DL4, LILRB1 and LILRB2 receptors on uterine immune cells to promote fetal development while maintaining maternal-fetal tolerance. Upon interaction with KIR2DL4 and LILRB1 receptors on decidual NK cells, it triggers NK cell senescence-associated secretory phenotype as a molecular switch to promote vascular remodeling and fetal growth in early pregnancy. Through interaction with KIR2DL4 receptor on decidual macrophages induces pro-inflammatory cytokine production mainly associated with tissue remodeling. Through interaction with LILRB2 receptor triggers differentiation of type 1 regulatory T cells and myeloid-derived suppressor cells, both of which actively maintain maternal-fetal tolerance. May play a role in balancing tolerance and antiviral-immunity at maternal-fetal interface by keeping in check the effector functions of NK, CD8+ T cells and B cells. Reprograms B cells toward an immune suppressive phenotype via LILRB1. May induce immune activation/suppression via intercellular membrane transfer (trogocytosis), likely enabling interaction with KIR2DL4, which resides mostly in endosomes. Through interaction with the inhibitory receptor CD160 on endothelial cells may control angiogenesis in immune privileged sites. In terms of biological role, likely does not bind B2M and presents peptides. Negatively regulates NK cell- and CD8+ T cell-mediated cytotoxicity. Its function is as follows. Non-classical major histocompatibility class Ib molecule involved in immune regulatory processes at the maternal-fetal interface. In complex with B2M/beta-2 microglobulin binds a limited repertoire of nonamer self-peptides derived from intracellular proteins including histones and ribosomal proteins. Peptide-bound HLA-G-B2M complex acts as a ligand for inhibitory/activating KIR2DL4, LILRB1 and LILRB2 receptors on uterine immune cells to promote fetal development while maintaining maternal-fetal tolerance. Upon interaction with KIR2DL4 and LILRB1 receptors on decidual NK cells, it triggers NK cell senescence-associated secretory phenotype as a molecular switch to promote vascular remodeling and fetal growth in early pregnancy. Through interaction with KIR2DL4 receptor on decidual macrophages induces pro-inflammatory cytokine production mainly associated with tissue remodeling. Through interaction with LILRB2 receptor triggers differentiation of type 1 regulatory T cells and myeloid-derived suppressor cells, both of which actively maintain maternal-fetal tolerance. Reprograms B cells toward an immune suppressive phenotype via LILRB1. Functionally, likely does not bind B2M and presents peptides. The chain is HLA class I histocompatibility antigen, alpha chain G from Homo sapiens (Human).